The primary structure comprises 101 residues: Gamma-secretase subunit PEN-2 (101 aa).

Over 1-17 the chain is Cytoplasmic; sequence MNLERIPNEEKLSLCRR. Positions 18–36 form an intramembrane region, helical; it reads YYLGGFAFLPFLWLVNILW. Residues 37 to 57 lie on the Cytoplasmic side of the membrane; sequence FFKEAFLKPAYTEQPQIKSYV. A helical membrane pass occupies residues 58–78; that stretch reads KKSALGLLLWVAVLTTWITVF. The Lumenal segment spans residues 79–101; it reads QHFRAQWGEVGDYLSFTIPLGTA.

This sequence belongs to the PEN-2 family. As to quaternary structure, the functional gamma-secretase complex is composed of at least four polypeptides: a presenilin homodimer (psen1 or psen2), nicastrin (ncstn), aph1 (aph1a or aph1b) and psenen.

The protein resides in the endoplasmic reticulum membrane. It is found in the golgi apparatus. Its subcellular location is the golgi stack membrane. It localises to the cell membrane. The protein localises to the membrane. In terms of biological role, essential subunit of the gamma-secretase complex, an endoprotease complex that catalyzes the intramembrane cleavage of integral membrane proteins such as Notch receptors and APP (amyloid-beta precursor protein). The gamma-secretase complex plays a role in Notch and Wnt signaling cascades and regulation of downstream processes via its role in processing key regulatory proteins. This is Gamma-secretase subunit PEN-2 (psenen) from Danio rerio (Zebrafish).